A 345-amino-acid chain; its full sequence is Putative membrane protein ORF59 (345 aa).

4 helical membrane passes run 46–63 (LVFA…MMLI), 101–118 (IVFV…LVFL), 147–165 (IFGI…FSIL), and 265–286 (VVPV…WMVI).

The protein localises to the membrane. This Ictalurid herpesvirus 1 (strain Auburn) (IcHV-1) protein is Putative membrane protein ORF59 (ORF59).